The sequence spans 201 residues: Pectinesterase inhibitor 7 (201 aa).

Positions 1 to 24 (MARNFELSLILFVLYLSTAAIVMA) are cleaved as a signal peptide. 2 disulfides stabilise this stretch: C42-C51 and C108-C159.

It belongs to the PMEI family. Binds reversibly to PME3 to inhibit its activity; the stability of the PME3-PMEI7 complex and the inhibition of the pectin methylesterase (PME) activity is pH-dependent, based on protonation status of amino-acids at the complex interface. As to expression, accumulates in etiolated hypocotyls (at protein level).

The protein resides in the secreted. The protein localises to the extracellular space. Its subcellular location is the apoplast. It localises to the cell wall. In terms of biological role, pectin methylesterase (PME) inhibitor that can target PME3 in a pH-dependent manner, mainly in slightly acidic conditions (pH 6.0 and 5.0) but not at pH 7.0; this processus relies on changes in the protonation of amino acids involved in intermolecular and intramolecular interactions. Regulates homogalacturonan methylesterification during plant development. The protein is Pectinesterase inhibitor 7 of Arabidopsis thaliana (Mouse-ear cress).